The sequence spans 334 residues: Endoplasmic reticulum junction formation protein lunapark (334 aa).

The Cytoplasmic portion of the chain corresponds to 1-40; the sequence is MGWFFQKKKEFDFGGELDRLEMKLEEAQYNIDNIQSQKKK. The stretch at 12–42 forms a coiled coil; the sequence is DFGGELDRLEMKLEEAQYNIDNIQSQKKKIL. A helical membrane pass occupies residues 41-61; it reads ILFRYTVCSLAIYTIGMAVWA. Topologically, residues 62 to 78 are lumenal; the sequence is SRSSILFQHPLFSKLFR. The helical transmembrane segment at 79 to 99 threads the bilayer; sequence ISLYILGVFSLYMFRWAIAWF. Residues 99-127 are a coiled coil; the sequence is FCEKRLSRARMNLHKLNAEKRKILDALKS. The Cytoplasmic segment spans residues 100 to 334; that stretch reads CEKRLSRARM…SVPESLTPTK (235 aa). The C4-type; plays a role in ER morphology zinc finger occupies 201 to 227; sequence CSHCFHHNGLASYGEKASDVRYVCLFC. The interval 237–315 is disordered; that stretch reads KSLPSSEMDS…SSPDASYNSV (79 aa). Polar residues predominate over residues 239-252; sequence LPSSEMDSNLQTNP. The segment covering 253-270 has biased composition (low complexity); the sequence is SSISKGKKNNSNNTTQKG. Residues 273-283 are compositionally biased toward polar residues; sequence IISSPQVINAS. Serine 284 carries the post-translational modification Phosphoserine. The span at 297–315 shows a compositional bias: low complexity; it reads ALPTSPLSSSSPDASYNSV.

It belongs to the lunapark family.

The protein resides in the endoplasmic reticulum membrane. It localises to the golgi apparatus membrane. Functionally, plays a role in tubular endoplasmic reticulum network formation and maintenance. In Schizosaccharomyces pombe (strain 972 / ATCC 24843) (Fission yeast), this protein is Endoplasmic reticulum junction formation protein lunapark (lnp1).